Here is a 102-residue protein sequence, read N- to C-terminus: Small ribosomal subunit protein uS10 (102 aa).

The protein belongs to the universal ribosomal protein uS10 family. As to quaternary structure, part of the 30S ribosomal subunit.

In terms of biological role, involved in the binding of tRNA to the ribosomes. This chain is Small ribosomal subunit protein uS10, found in Parafrankia sp. (strain EAN1pec).